The sequence spans 220 residues: HTH-type transcriptional repressor KstR (220 aa).

An HTH tetR-type domain is found at 36–96; the sequence is RERRKRILDA…SALGREFSRI (61 aa). The H-T-H motif DNA-binding region spans 59–78; sequence QMRAVADRADVAVGTLYRYF.

As to quaternary structure, homodimer.

Functionally, controls the expression of genes used for utilizing diverse lipids as energy sources. The polypeptide is HTH-type transcriptional repressor KstR (kstR) (Mycobacterium tuberculosis (strain ATCC 25618 / H37Rv)).